The primary structure comprises 656 residues: Choline transporter-like protein 1 (656 aa).

Gly2 carries the N-myristoyl glycine lipid modification. Residues 2–29 lie on the Cytoplasmic side of the membrane; sequence GCCSSASAAQSSKREWKPLEDRSCTDIP. Residues 30-50 form a helical membrane-spanning segment; that stretch reads WLLLFVLFCIGMGFICGFSVA. Topologically, residues 51 to 211 are extracellular; sequence TGAAARLVSG…RLISGVMTSK (161 aa). Asn134 and Asn179 each carry an N-linked (GlcNAc...) asparagine glycan. A helical transmembrane segment spans residues 212–232; sequence EIILGLCLLSLVLSMILMVII. Topologically, residues 233-237 are cytoplasmic; that stretch reads RYISR. A helical membrane pass occupies residues 238 to 258; sequence VLVWILTILVILGSLGGTGVL. The Extracellular portion of the chain corresponds to 259-287; sequence WWLYAKQRRSPKETVIPEQLQIAEDNLRA. Residues 288–308 form a helical membrane-spanning segment; it reads LLIYAISATVFTVILFLIMLV. At 309–314 the chain is on the cytoplasmic side; sequence MRKRVA. Residues 315–335 traverse the membrane as a helical segment; the sequence is LTIALFHVAGKVFIHLPLLVF. The Extracellular portion of the chain corresponds to 336–337; that stretch reads QP. A helical membrane pass occupies residues 338–358; it reads FWTFFALVLFWAYWIMTLLFL. Topologically, residues 359–379 are cytoplasmic; sequence GTTGSAVQNEQGFVEYKISGP. Residues 380–400 form a helical membrane-spanning segment; the sequence is LQYMWWYHVVGLIWISEFILA. The Extracellular segment spans residues 401–441; the sequence is CQQMTVAGAVVTYYFTRDKRNLPFTPILASVNRLIRYHLGT. The helical transmembrane segment at 442–462 threads the bilayer; that stretch reads VAKGSFIITLVKIPRMILMYI. Topologically, residues 463–536 are cytoplasmic; sequence HSQLKGKENA…RVAAINTVGD (74 aa). A helical membrane pass occupies residues 537–557; it reads FMLFLGKVLIVCSTGLAGIML. Residues 558–565 lie on the Extracellular side of the membrane; it reads LNYQQDYT. The helical transmembrane segment at 566-586 threads the bilayer; sequence VWVLPLIIVCLFAFLVAHCFL. The Cytoplasmic portion of the chain corresponds to 587-656; sequence SIYEMVVDVL…KPMASGASSA (70 aa). Residues 635 to 656 form a disordered region; sequence AGKGGAADARKLKPMASGASSA. Ser651 carries the phosphoserine modification.

Belongs to the CTL (choline transporter-like) family. Expressed in neurons, oligodendrocytes and astrocytes. Also expressed in the mucosal cell layer of the colon. In the developing brain, isoform 1 is expressed in both neurons and oligodendroglial cells, whereas isoform 2 is restricted to oligodendroglial cells.

It is found in the cell membrane. Its subcellular location is the mitochondrion outer membrane. It carries out the reaction choline(out) + n H(+)(in) = choline(in) + n H(+)(out). The enzyme catalyses ethanolamine(out) + n H(+)(in) = ethanolamine(in) + n H(+)(out). Choline transporter, acts as a choline/H+ antiporter. Also acts as a high-affinity ethanolamine/H+ antiporter, regulating the supply of extracellular ethanolamine (Etn) for the CDP-Etn pathway, redistribute intracellular Etn and balance the CDP-Cho and CDP-Etn arms of the Kennedy pathway. Involved in membrane synthesis and myelin production. In Rattus norvegicus (Rat), this protein is Choline transporter-like protein 1 (Slc44a1).